The primary structure comprises 937 residues: Chaperone protein ClpD2, chloroplastic (937 aa).

The N-terminal 80 residues, 1-80 (MEACCCSSSS…FERFTERAVK (80 aa)), are a transit peptide targeting the chloroplast. 2 repeat regions span residues 81–137 (AVVF…VGKE) and 152–217 (FSGA…VQGE). The Clp R domain maps to 81 to 217 (AVVFSQREAR…KQALTRVQGE (137 aa)). Residues 259 to 513 (LALFCLDLTM…RMESFKRKKE (255 aa)) are i. ATP contacts are provided by residues 304–311 (GEAGVGKT) and 658–665 (GPTGVGKT). Residues 584 to 775 (VGSEEIARVT…LIVMTSNVGS (192 aa)) are II.

It belongs to the ClpA/ClpB family. ClpD subfamily. As to expression, highly expressed in stems, culms and leaves.

Its subcellular location is the plastid. It localises to the chloroplast. Molecular chaperone that may interact with a ClpP-like protease involved in degradation of denatured proteins in the chloroplast. In Oryza sativa subsp. japonica (Rice), this protein is Chaperone protein ClpD2, chloroplastic (CLPD2).